We begin with the raw amino-acid sequence, 372 residues long: Glutamate 5-kinase (372 aa).

Lys14 contacts ATP. Positions 54, 141, and 153 each coordinate substrate. 173–174 (TD) lines the ATP pocket. Residues 280-358 (RGTLVLDEGA…DAIVGVLGYM (79 aa)) form the PUA domain.

Belongs to the glutamate 5-kinase family.

The protein resides in the cytoplasm. The catalysed reaction is L-glutamate + ATP = L-glutamyl 5-phosphate + ADP. It participates in amino-acid biosynthesis; L-proline biosynthesis; L-glutamate 5-semialdehyde from L-glutamate: step 1/2. Catalyzes the transfer of a phosphate group to glutamate to form L-glutamate 5-phosphate. This Pseudomonas fluorescens (strain ATCC BAA-477 / NRRL B-23932 / Pf-5) protein is Glutamate 5-kinase.